The sequence spans 615 residues: MLSYFQGFVPIHTIFYSVFHPTEGSKIKYEFPPNNLKNHGINFNTFKNYIIPKPILCHKLITFKYGTYRIVCYPVTINSPIYARNFFSFNFVFVFPYDCETSPYEPAITRLGKMFKVLEEQNQLLSKSERDPVFFDLKVLENSTTTPSTAGPSSTPNPSSNTTPTHPTSEKDTKDMRSSRYSDLIKDLGLPQSAFSIQDLLMRIFQDLNNYSECLIPIDEGNAVDIKIFPLLRPPTTCVSLEDVPLSSVNLKKIIDVNWDPTMMSIVPYIDGLNSIAKISKLSNSDPGLVIECIRHLIYYKCVTLSDIFQFSNIYAPSSLIRNFLTDPLMASDCQSYVTFPEVSKISNLPLNKSLGSGDQDSPSFSVRRKSKSSSIPSNPDSRTTSFSSTSRVSQNSSLNSSFSSIYKDWRQSQTSCSSSNIHVINNRNRFLPTRSCLFDLYRSLSQGQTLKTWYESKYMILKENNIDIRRFITFGLEKRIIYRCYSFPVMINAGSREPKEMTPIITKDLVNNDKLLEKRNHNHLLSATGSRNTAQSGNLKPERPSKVSFEMQRVSSLATGKSTMPKLSDEEEGILEESIRNAETFDKICVLLSKPKLEVESYLNELGEFKVINS.

A compositionally biased stretch (low complexity) spans 143 to 167 (STTTPSTAGPSSTPNPSSNTTPTHP). Disordered stretches follow at residues 143–176 (STTT…TKDM), 354–398 (SLGS…QNSS), and 527–551 (SATG…VSFE). Serine 362 is modified (phosphoserine). Positions 373-398 (SSSIPSNPDSRTTSFSSTSRVSQNSS) are enriched in low complexity. Residues 527-539 (SATGSRNTAQSGN) are compositionally biased toward polar residues.

This sequence belongs to the NPR2 family. Component of the SEA complex composed of at least IML1/SEA1, RTC1/SEA2, MTC5/SEA3, NPR2, NPR3, SEA4, SEC13 and SEH1. Forms a heterodimer with NPR3.

It localises to the vacuole membrane. Its function is as follows. Component of the SEA complex which coats the vacuolar membrane and is involved in intracellular trafficking, autophagy, response to nitrogen starvation, and amino acid biogenesis. Mediates inactivation of the TORC1 complex in response to amino acid starvation. Post-transcriptional regulator of nitrogen permeases. May be involved in putative NPR1-dependent phosphorylation of nitrogen permeases or in the processing and targeting of nitrogen permeases at the level of the endoplasmic reticulum. This chain is Nitrogen permease regulator 2 (NPR2), found in Saccharomyces cerevisiae (strain ATCC 204508 / S288c) (Baker's yeast).